The sequence spans 311 residues: Manganese-dependent inorganic pyrophosphatase (311 aa).

Mn(2+) contacts are provided by H10, D14, D16, D75, H97, and D149.

This sequence belongs to the PPase class C family. As to quaternary structure, homodimer. The cofactor is Mn(2+).

It carries out the reaction diphosphate + H2O = 2 phosphate + H(+). The sequence is that of Manganese-dependent inorganic pyrophosphatase (ppaC) from Methanothrix thermoacetophila (strain DSM 6194 / JCM 14653 / NBRC 101360 / PT) (Methanosaeta thermophila).